Consider the following 208-residue polypeptide: Small ribosomal subunit protein uS4 (208 aa).

Residues 98 to 158 form the S4 RNA-binding domain; it reads CRLDTVSYRM…EKAKNHLRIK (61 aa).

It belongs to the universal ribosomal protein uS4 family. Part of the 30S ribosomal subunit. Contacts protein S5. The interaction surface between S4 and S5 is involved in control of translational fidelity.

One of the primary rRNA binding proteins, it binds directly to 16S rRNA where it nucleates assembly of the body of the 30S subunit. Its function is as follows. With S5 and S12 plays an important role in translational accuracy. In Nitrosospira multiformis (strain ATCC 25196 / NCIMB 11849 / C 71), this protein is Small ribosomal subunit protein uS4.